The sequence spans 151 residues: FAD synthase (151 aa).

Residues 21–22 (TF), 26–29 (HPGH), and aspartate 104 contribute to the ATP site.

Belongs to the archaeal FAD synthase family. Homodimer. It depends on a divalent metal cation as a cofactor.

The catalysed reaction is FMN + ATP + H(+) = FAD + diphosphate. Its pathway is cofactor biosynthesis; FAD biosynthesis; FAD from FMN: step 1/1. Functionally, catalyzes the transfer of the AMP portion of ATP to flavin mononucleotide (FMN) to produce flavin adenine dinucleotide (FAD) coenzyme. This is FAD synthase from Methanosarcina mazei (strain ATCC BAA-159 / DSM 3647 / Goe1 / Go1 / JCM 11833 / OCM 88) (Methanosarcina frisia).